Here is a 301-residue protein sequence, read N- to C-terminus: tRNA U34 carboxymethyltransferase (301 aa).

Carboxy-S-adenosyl-L-methionine-binding positions include Lys-70, Trp-84, Lys-89, Gly-108, 130-132 (DPS), 157-158 (VE), Tyr-177, and Arg-292.

Belongs to the class I-like SAM-binding methyltransferase superfamily. CmoB family. As to quaternary structure, homotetramer.

The catalysed reaction is carboxy-S-adenosyl-L-methionine + 5-hydroxyuridine(34) in tRNA = 5-carboxymethoxyuridine(34) in tRNA + S-adenosyl-L-homocysteine + H(+). Catalyzes carboxymethyl transfer from carboxy-S-adenosyl-L-methionine (Cx-SAM) to 5-hydroxyuridine (ho5U) to form 5-carboxymethoxyuridine (cmo5U) at position 34 in tRNAs. The protein is tRNA U34 carboxymethyltransferase of Sulfurovum sp. (strain NBC37-1).